The following is a 1875-amino-acid chain: Soluble starch synthase 3a, chloroplastic/amyloplastic (1875 aa).

The N-terminal 49 residues, 1–49 (MEMALRPQSLLCPRSRLKVVIRPASSASGGGLAQYFLMTRRYTGSRIVR), are a transit peptide targeting the chloroplast. The stretch at 1007 to 1065 (KRELERVATEEAERRRHAEEQQRMGEQRAAEQAAREQAKKEIELKKNKLQNLLSSARTH) forms a coiled coil. The segment at 1014 to 1043 (ATEEAERRRHAEEQQRMGEQRAAEQAAREQ) is disordered.

Belongs to the glycosyltransferase 1 family. Bacterial/plant glycogen synthase subfamily. Expressed in the endosperm.

Its subcellular location is the plastid. It is found in the chloroplast. The protein localises to the amyloplast. It catalyses the reaction [(1-&gt;4)-alpha-D-glucosyl](n) + ADP-alpha-D-glucose = [(1-&gt;4)-alpha-D-glucosyl](n+1) + ADP + H(+). It participates in glycan biosynthesis; starch biosynthesis. In terms of biological role, involved in starch synthesis in endosperm amyloplasts. Plays an important role in the elongation of amylopectin B chains. This chain is Soluble starch synthase 3a, chloroplastic/amyloplastic, found in Oryza sativa subsp. japonica (Rice).